Consider the following 483-residue polypeptide: Glutamyl-tRNA(Gln) amidotransferase subunit A (483 aa).

Residues lysine 76 and serine 151 each act as charge relay system in the active site. Serine 175 functions as the Acyl-ester intermediate in the catalytic mechanism.

Belongs to the amidase family. GatA subfamily. Heterotrimer of A, B and C subunits.

The enzyme catalyses L-glutamyl-tRNA(Gln) + L-glutamine + ATP + H2O = L-glutaminyl-tRNA(Gln) + L-glutamate + ADP + phosphate + H(+). Allows the formation of correctly charged Gln-tRNA(Gln) through the transamidation of misacylated Glu-tRNA(Gln) in organisms which lack glutaminyl-tRNA synthetase. The reaction takes place in the presence of glutamine and ATP through an activated gamma-phospho-Glu-tRNA(Gln). This is Glutamyl-tRNA(Gln) amidotransferase subunit A from Coxiella burnetii (strain CbuK_Q154) (Coxiella burnetii (strain Q154)).